The following is a 357-amino-acid chain: Alanine racemase (357 aa).

The active-site Proton acceptor; specific for D-alanine is Lys-33. N6-(pyridoxal phosphate)lysine is present on Lys-33. Arg-130 contacts substrate. Tyr-252 functions as the Proton acceptor; specific for L-alanine in the catalytic mechanism. Met-300 is a binding site for substrate.

Belongs to the alanine racemase family. Pyridoxal 5'-phosphate serves as cofactor.

It carries out the reaction L-alanine = D-alanine. The protein operates within amino-acid biosynthesis; D-alanine biosynthesis; D-alanine from L-alanine: step 1/1. Its function is as follows. Catalyzes the interconversion of L-alanine and D-alanine. May also act on other amino acids. The protein is Alanine racemase (alr) of Acidiphilium cryptum (strain JF-5).